The chain runs to 510 residues: F-box only protein 15 (510 aa).

The region spanning 77–117 (MPSEILLKIFSYLDAVSLLCTGCVSRRFYHLANDNFIWIGI) is the F-box domain.

As to quaternary structure, directly interacts with SKP1 and CUL1.

In terms of biological role, substrate-recognition component of the SCF (SKP1-CUL1-F-box protein)-type E3 ubiquitin ligase complex. The chain is F-box only protein 15 (FBXO15) from Homo sapiens (Human).